Reading from the N-terminus, the 227-residue chain is Ribosomal RNA small subunit methyltransferase G (227 aa).

S-adenosyl-L-methionine-binding positions include Gly-74, Leu-79, 124-125 (AE), and Arg-142.

This sequence belongs to the methyltransferase superfamily. RNA methyltransferase RsmG family.

It is found in the cytoplasm. Its function is as follows. Specifically methylates the N7 position of guanine in position 518 of 16S rRNA. The polypeptide is Ribosomal RNA small subunit methyltransferase G (Mycolicibacterium gilvum (strain PYR-GCK) (Mycobacterium gilvum (strain PYR-GCK))).